Here is a 207-residue protein sequence, read N- to C-terminus: 5-amino-6-(5-phosphoribosylamino)uracil reductase (207 aa).

Position 6 (Ser-6) interacts with substrate. Residue Trp-8 participates in NADP(+) binding. Arg-22 lines the substrate pocket. Asp-38 provides a ligand contact to NADP(+). Substrate is bound by residues Leu-42 and Arg-45. Ser-72 serves as a coordination point for NADP(+). Glu-137 is a substrate binding site.

Belongs to the HTP reductase family.

It catalyses the reaction 5-amino-6-(5-phospho-D-ribitylamino)uracil + NADP(+) = 5-amino-6-(5-phospho-D-ribosylamino)uracil + NADPH + H(+). The protein operates within cofactor biosynthesis; riboflavin biosynthesis; 5-amino-6-(D-ribitylamino)uracil from GTP: step 3/4. In Buchnera aphidicola subsp. Acyrthosiphon pisum (strain APS) (Acyrthosiphon pisum symbiotic bacterium), this protein is 5-amino-6-(5-phosphoribosylamino)uracil reductase (ribD2).